Reading from the N-terminus, the 473-residue chain is FAD-dependent oxidoreductase dpchF (473 aa).

The N-terminal stretch at 1–21 (MKLSFIASPVWALALAQFAAA) is a signal peptide. N-linked (GlcNAc...) asparagine glycosylation is found at Asn-98, Asn-128, Asn-181, Asn-262, and Asn-330.

It belongs to the beta-cyclopiazonate dehydrogenase family. The cofactor is FAD.

It functions in the pathway secondary metabolite biosynthesis; terpenoid biosynthesis. Functionally, FAD-dependent oxidoreductase; part of the gene cluster that mediates the biosynthesis of the diterpenoid pyrones higginsianins A and B. The first step of the pathway is the synthesis of the alpha-pyrone moiety by the polyketide synthase dpchA via condensation of one acetyl-CoA starter unit with 3 malonyl-CoA units and 2 methylations. The alpha-pyrone is then combined with geranylgeranyl pyrophosphate (GGPP) formed by the GGPP synthase dpchD through the action of the prenyltransferase dpchC to yield a linear alpha-pyrone diterpenoid. Subsequent steps in the diterpenoid pyrone biosynthetic pathway involve the decalin core formation, which is initiated by the epoxidation of the C10-C11 olefin by the FAD-dependent oxidoreductase dpchE, and is followed by a cyclization cascade catalyzed by the terpene cyclase dpchB. The short chain dehydrogenase/reductase dpchG then oxidizes the 8S hydroxy group to a ketone and the short chain dehydrogenase/reductase dpchH reduces the ketone to the 8R hydroxy group to yield higginsianin B. Finally, the FAD-dependent oxidoreductase dpchF converts higginsianin B into higginsianin A. In Colletotrichum higginsianum (strain IMI 349063) (Crucifer anthracnose fungus), this protein is FAD-dependent oxidoreductase dpchF.